Reading from the N-terminus, the 412-residue chain is Double C2-like domain-containing protein beta (412 aa).

Residues 1–36 (MTLRRRGEKATISIQEHMAIDVCPGPIRPIKQISDY) are negatively regulates targeting to plasma membrane. The interval 1–90 (MTLRRRGEKA…EDVDQLFGAY (90 aa)) is mediates interaction with DYNLT1. The disordered stretch occupies residues 38 to 123 (PRFPRGLPPT…PDADGYESDD (86 aa)). A compositionally biased stretch (low complexity) spans 49–73 (APRASAPPDAPARSPAATAGPRSPS). A compositionally biased stretch (pro residues) spans 95 to 108 (GPSPGPSPVRPPAK). Positions 112–123 (DEPDADGYESDD) are enriched in acidic residues. C2 domains are found at residues 126–250 (ALGT…SICL) and 266–399 (ERGR…ERWH). Residues D157, D163, D218, D220, D297, D303, D357, D359, and D365 each contribute to the Ca(2+) site. The segment at 257–375 (DKAEDKSLEE…FIGGVVLGIN (119 aa)) is mediates interaction with STXBP3. At S411 the chain carries Phosphoserine.

As to quaternary structure, interacts with STX4; the interaction is calcium-dependent, increased by insulin and glucose, and mediates vesicle fusion with plasma membrane in pancreatic cells and adipocytes. Interacts with STXBP3; the interaction is direct, occurs at the cell membrane and regulates glucose-stimulated insulin secretion. Interacts with cytoplasmic dynein light chain DYNLT1. Interacts with the SNARE (soluble N-ethylmaleimide-sensitive factor attached protein receptor) complex composed of SNAP25, STX1A and VAMP2; the interaction is calcium-dependent and competitive with SYT1. May interact with UNC13A; the interaction mediates targeting to the plasma membrane. Requires Ca(2+) as cofactor. As to expression, expressed in brain; highly enriched in neurons.

Its subcellular location is the cytoplasm. The protein localises to the cytoplasmic granule. It is found in the cell membrane. Its function is as follows. Calcium sensor which positively regulates SNARE-dependent fusion of vesicles with membranes. Binds phospholipids in a calcium-dependent manner and may act at the priming stage of fusion by modifying membrane curvature to stimulate fusion. Involved in calcium-triggered exocytosis in chromaffin cells and calcium-dependent spontaneous release of neurotransmitter in absence of action potentials in neuronal cells. Involved both in glucose-stimulated insulin secretion in pancreatic cells and insulin-dependent GLUT4 transport to the plasma membrane in adipocytes. This is Double C2-like domain-containing protein beta (Doc2b) from Rattus norvegicus (Rat).